A 392-amino-acid chain; its full sequence is Putative non-inhibitory serpin-10 (392 aa).

Residues 333 to 357 (GTTAVEATYSCCSPTYSGPESPKPR) form an RCL region.

It belongs to the serpin family.

The polypeptide is Putative non-inhibitory serpin-10 (Oryza sativa subsp. japonica (Rice)).